Reading from the N-terminus, the 40-residue chain is uncharacterized protein (40 aa).

This is an uncharacterized protein from Leptolyngbya boryana (Plectonema boryanum).